The following is a 48-amino-acid chain: Photosystem II reaction center protein K (48 aa).

Positions 1 to 11 are excised as a propeptide; the sequence is MFLFNLEQSIG. The helical transmembrane segment at 23–43 threads the bilayer; that stretch reads LVDVLPIIPLLFLLLAFVWQA.

It belongs to the PsbK family. As to quaternary structure, PSII is composed of 1 copy each of membrane proteins PsbA, PsbB, PsbC, PsbD, PsbE, PsbF, PsbH, PsbI, PsbJ, PsbK, PsbL, PsbM, PsbT, PsbX, PsbY, PsbZ, Psb30/Ycf12, at least 3 peripheral proteins of the oxygen-evolving complex and a large number of cofactors. It forms dimeric complexes.

The protein resides in the plastid. It localises to the chloroplast thylakoid membrane. Its function is as follows. One of the components of the core complex of photosystem II (PSII). PSII is a light-driven water:plastoquinone oxidoreductase that uses light energy to abstract electrons from H(2)O, generating O(2) and a proton gradient subsequently used for ATP formation. It consists of a core antenna complex that captures photons, and an electron transfer chain that converts photonic excitation into a charge separation. The chain is Photosystem II reaction center protein K from Lepocinclis buetschlii.